The chain runs to 201 residues: Superoxide dismutase [Mn/Fe] (201 aa).

Fe(3+) contacts are provided by His27, His75, Asp161, and His165. Residues His27, His75, Asp161, and His165 each contribute to the Mn(2+) site.

The protein belongs to the iron/manganese superoxide dismutase family. Homotetramer. Mn(2+) is required as a cofactor. It depends on Fe(3+) as a cofactor.

The enzyme catalyses 2 superoxide + 2 H(+) = H2O2 + O2. With respect to regulation, shows decreasing activity with increasing pH. Slightly inhibited by azide and fluoride at pH 7-8; the inhibition is drastically increased towards lower pH. Its function is as follows. Destroys superoxide anion radicals which are normally produced within the cells and which are toxic to biological systems. Catalyzes the dismutation of superoxide anion radicals into O2 and H2O2 by successive reduction and oxidation of the transition metal ion at the active site. This is Superoxide dismutase [Mn/Fe] (sodA) from Propionibacterium freudenreichii subsp. shermanii.